The chain runs to 683 residues: Hexamerin 70b (683 aa).

The N-terminal stretch at 1 to 21 (MIVIMKAGFLFLASLCLLVQA) is a signal peptide. Positions 32 to 153 (VTRQKNIYEL…VAVIHRPDTK (122 aa)) constitute a Hemocyanin N-terminal domain. A Hemocyanin middle domain is found at 159–428 (PMYEVMPHLY…SIYKTILDYY (270 aa)). Residue Asn-203 is glycosylated (N-linked (GlcNAc...) asparagine). One can recognise a Hemocyanin C-terminal domain in the interval 437 to 673 (KYTTEELNFP…IHVKEVLVHH (237 aa)).

Belongs to the hemocyanin/hexamerin family. In terms of assembly, probable homohexamer. In terms of tissue distribution, expressed in the fat body and secreted into the hemolymph (at protein level). Present in trophocytes and oenocytes of the fat body (at protein level).

Its subcellular location is the secreted. It is found in the nucleus. The protein localises to the cytoplasm. The protein resides in the cytoplasmic granule. Its function is as follows. Storage protein that may function as a nutrient supply to compensate for lack of dietary proteins during metamorphosis and egg production. This Apis mellifera (Honeybee) protein is Hexamerin 70b.